The primary structure comprises 1160 residues: ATP-dependent helicase/deoxyribonuclease subunit B (1160 aa).

The protein belongs to the helicase family. AddB/RexB type 2 subfamily. Heterodimer of AddA and RexB. It depends on Mg(2+) as a cofactor.

Its function is as follows. The heterodimer acts as both an ATP-dependent DNA helicase and an ATP-dependent, dual-direction single-stranded exonuclease. Recognizes the chi site generating a DNA molecule suitable for the initiation of homologous recombination. This subunit has 5' -&gt; 3' nuclease activity but not helicase activity. The chain is ATP-dependent helicase/deoxyribonuclease subunit B from Lactobacillus helveticus (strain DPC 4571).